We begin with the raw amino-acid sequence, 512 residues long: Histidine ammonia-lyase (512 aa).

A cross-link (5-imidazolinone (Ala-Gly)) is located at residues 146-148; the sequence is ASG. The residue at position 147 (Ser147) is a 2,3-didehydroalanine (Ser).

It belongs to the PAL/histidase family. Post-translationally, contains an active site 4-methylidene-imidazol-5-one (MIO), which is formed autocatalytically by cyclization and dehydration of residues Ala-Ser-Gly.

The protein localises to the cytoplasm. It carries out the reaction L-histidine = trans-urocanate + NH4(+). It functions in the pathway amino-acid degradation; L-histidine degradation into L-glutamate; N-formimidoyl-L-glutamate from L-histidine: step 1/3. In Paracidovorax citrulli (strain AAC00-1) (Acidovorax citrulli), this protein is Histidine ammonia-lyase.